The chain runs to 297 residues: Zinc finger protein 784 (297 aa).

Over residues 1 to 12 the composition is skewed to pro residues; sequence MAAARPDPPIPS. Residues 1 to 39 are disordered; it reads MAAARPDPPIPSSPTRESPSPEPPDLVLVPDGRPVTPPG. Phosphoserine is present on S13. 3 consecutive C2H2-type zinc fingers follow at residues 64-86, 100-122, and 128-150; these read FHCA…EHGH, SRCH…YSLH, and YRCS…QHRH. The segment at 149–175 is disordered; the sequence is RHGVEPGTSERLLPTTTTGQPNSRVAQ. The span at 162 to 173 shows a compositional bias: polar residues; that stretch reads PTTTTGQPNSRV. 3 C2H2-type zinc fingers span residues 195–217, 223–245, and 251–273; these read FACR…ERVH, YHCS…ARIH, and FRCM…QRTH. A disordered region spans residues 268 to 297; it reads KHQRTHFHGPGSGVGESRGQLRSSSVSQES. Residues 287–297 are compositionally biased toward polar residues; sequence QLRSSSVSQES.

The protein belongs to the krueppel C2H2-type zinc-finger protein family.

It localises to the nucleus. May be involved in transcriptional regulation. The protein is Zinc finger protein 784 (Znf784) of Mus musculus (Mouse).